Here is a 148-residue protein sequence, read N- to C-terminus: IQ domain-containing protein F5 (148 aa).

IQ domains follow at residues 11 to 40 (ERSAAVFIQAWWRGMLVRRTLLHAALRAWI) and 67 to 96 (QEWAAVRLQSWVRMWCVRQRYCRLLNAVRI).

This Homo sapiens (Human) protein is IQ domain-containing protein F5 (IQCF5).